Reading from the N-terminus, the 610-residue chain is Aspartate--tRNA(Asp/Asn) ligase (610 aa).

Residue Glu196 participates in L-aspartate binding. An aspartate region spans residues 220–223; that stretch reads QIFK. Arg242 lines the L-aspartate pocket. ATP-binding positions include 242–244 and Gln251; that span reads RDE. His465 provides a ligand contact to L-aspartate. Residue Glu499 coordinates ATP. Arg506 contributes to the L-aspartate binding site. 551 to 554 serves as a coordination point for ATP; sequence GMDR.

The protein belongs to the class-II aminoacyl-tRNA synthetase family. Type 1 subfamily. In terms of assembly, homodimer.

The protein localises to the cytoplasm. The catalysed reaction is tRNA(Asx) + L-aspartate + ATP = L-aspartyl-tRNA(Asx) + AMP + diphosphate. In terms of biological role, aspartyl-tRNA synthetase with relaxed tRNA specificity since it is able to aspartylate not only its cognate tRNA(Asp) but also tRNA(Asn). Reaction proceeds in two steps: L-aspartate is first activated by ATP to form Asp-AMP and then transferred to the acceptor end of tRNA(Asp/Asn). The chain is Aspartate--tRNA(Asp/Asn) ligase from Nitratidesulfovibrio vulgaris (strain ATCC 29579 / DSM 644 / CCUG 34227 / NCIMB 8303 / VKM B-1760 / Hildenborough) (Desulfovibrio vulgaris).